A 207-amino-acid polypeptide reads, in one-letter code: Nitrophorin-1 (207 aa).

Residues 1-23 (MKSYTALLAVAILCLFAAVGVSG) form the signal peptide. Intrachain disulfides connect C25/C145 and C64/C194. Heme is bound at residue H82.

It belongs to the calycin superfamily. Nitrophorin family. Salivary gland (at protein level).

The protein localises to the secreted. Functionally, heme-based protein that deliver nitric oxide gas (NO) to the victim while feeding, resulting in vasodilation and inhibition of platelet aggregation. Reversibly binds nitric oxide (NO). Also binds tightly to histamine, which is released by the host to induce wound healing. In Rhodnius prolixus (Triatomid bug), this protein is Nitrophorin-1.